Here is a 184-residue protein sequence, read N- to C-terminus: V-type proton ATPase subunit E (184 aa).

This sequence belongs to the V-ATPase E subunit family.

Functionally, produces ATP from ADP in the presence of a proton gradient across the membrane. This Finegoldia magna (strain ATCC 29328 / DSM 20472 / WAL 2508) (Peptostreptococcus magnus) protein is V-type proton ATPase subunit E.